The chain runs to 428 residues: Keratin, type I cytoskeletal 18-A (428 aa).

Residues Ser-2–Asn-78 form a head region. A coil 1A region spans residues Glu-79–Thr-114. Positions Glu-79–Leu-390 constitute an IF rod domain. The segment at Leu-115–Val-131 is linker 1. The tract at residues Val-132–Leu-223 is coil 1B. Positions Arg-224 to Ile-247 are linker 12. A coil 2 region spans residues Met-248 to Gly-385. The tail stretch occupies residues Glu-386–Lys-428.

It belongs to the intermediate filament family. Heterotetramer of two type I and two type II keratins. Keratin-18 associates with keratin-8. Phosphorylated. Post-translationally, proteolytically cleaved by caspases during epithelial cell apoptosis.

When phosphorylated, plays a role in filament reorganization. The sequence is that of Keratin, type I cytoskeletal 18-A from Polypterus senegalus (Senegal bichir).